Here is a 393-residue protein sequence, read N- to C-terminus: Histidinol dehydrogenase (393 aa).

Residues tyrosine 112, glutamine 171, and asparagine 194 each coordinate NAD(+). Residues threonine 217, glutamine 239, and histidine 242 each contribute to the substrate site. The Zn(2+) site is built by glutamine 239 and histidine 242. Catalysis depends on proton acceptor residues glutamate 293 and histidine 294. Histidine 294, aspartate 326, glutamate 379, and histidine 384 together coordinate substrate. Aspartate 326 serves as a coordination point for Zn(2+). Residue histidine 384 participates in Zn(2+) binding.

The protein belongs to the histidinol dehydrogenase family. Zn(2+) serves as cofactor.

The enzyme catalyses L-histidinol + 2 NAD(+) + H2O = L-histidine + 2 NADH + 3 H(+). Its pathway is amino-acid biosynthesis; L-histidine biosynthesis; L-histidine from 5-phospho-alpha-D-ribose 1-diphosphate: step 9/9. Functionally, catalyzes the sequential NAD-dependent oxidations of L-histidinol to L-histidinaldehyde and then to L-histidine. This chain is Histidinol dehydrogenase, found in Sulfolobus acidocaldarius (strain ATCC 33909 / DSM 639 / JCM 8929 / NBRC 15157 / NCIMB 11770).